Consider the following 22-residue polypeptide: Ocellatin-LB1 (22 aa).

At Met22 the chain carries Methionine amide.

As to expression, expressed by the skin glands.

It is found in the secreted. Functionally, antibacterial peptide that inhibits Gram-negative bacteria A.actinomycetemcomitans ATCC 29522 (MIC=222.37 uM) and E.coli ATCC 25922 (MIC=114.04 uM). Also has antifungal activity against C.albicans ATCC 18804 (MIC=233.55 uM) and C.lusitaniae ATCC 56936 (MIC=233.55 uM). No activity against the Gram-positive bacterium S.aureus ATCC 25923. Shows virtually no hemolytic activity towards rabbit erythrocytes. In Leptodactylus labyrinthicus (Labyrinth frog), this protein is Ocellatin-LB1.